An 89-amino-acid polypeptide reads, in one-letter code: Elongation factor 1-beta (89 aa).

This sequence belongs to the EF-1-beta/EF-1-delta family.

Functionally, promotes the exchange of GDP for GTP in EF-1-alpha/GDP, thus allowing the regeneration of EF-1-alpha/GTP that could then be used to form the ternary complex EF-1-alpha/GTP/AAtRNA. In Methanococcus vannielii (strain ATCC 35089 / DSM 1224 / JCM 13029 / OCM 148 / SB), this protein is Elongation factor 1-beta.